The following is a 238-amino-acid chain: Ribonuclease PH (238 aa).

Residues Arg-86 and 124–126 each bind phosphate; that span reads GTR.

This sequence belongs to the RNase PH family. In terms of assembly, homohexameric ring arranged as a trimer of dimers.

The enzyme catalyses tRNA(n+1) + phosphate = tRNA(n) + a ribonucleoside 5'-diphosphate. In terms of biological role, phosphorolytic 3'-5' exoribonuclease that plays an important role in tRNA 3'-end maturation. Removes nucleotide residues following the 3'-CCA terminus of tRNAs; can also add nucleotides to the ends of RNA molecules by using nucleoside diphosphates as substrates, but this may not be physiologically important. Probably plays a role in initiation of 16S rRNA degradation (leading to ribosome degradation) during starvation. The sequence is that of Ribonuclease PH from Geotalea daltonii (strain DSM 22248 / JCM 15807 / FRC-32) (Geobacter daltonii).